A 236-amino-acid chain; its full sequence is Phosphoribosylaminoimidazole-succinocarboxamide synthase (236 aa).

Belongs to the SAICAR synthetase family.

The enzyme catalyses 5-amino-1-(5-phospho-D-ribosyl)imidazole-4-carboxylate + L-aspartate + ATP = (2S)-2-[5-amino-1-(5-phospho-beta-D-ribosyl)imidazole-4-carboxamido]succinate + ADP + phosphate + 2 H(+). Its pathway is purine metabolism; IMP biosynthesis via de novo pathway; 5-amino-1-(5-phospho-D-ribosyl)imidazole-4-carboxamide from 5-amino-1-(5-phospho-D-ribosyl)imidazole-4-carboxylate: step 1/2. In Campylobacter jejuni subsp. jejuni serotype O:2 (strain ATCC 700819 / NCTC 11168), this protein is Phosphoribosylaminoimidazole-succinocarboxamide synthase.